The chain runs to 860 residues: GAS2-like protein 2 (860 aa).

A compositionally biased stretch (basic residues) spans 1–12 (MSQHVGHGRRPR). The disordered stretch occupies residues 1 to 22 (MSQHVGHGRRPRTPGPPVRSIR). The Calponin-homology (CH) domain occupies 32-159 (EAMKEDLAEW…CLLELGRRAW (128 aa)). One can recognise a GAR domain in the interval 201 to 273 (CHFHNLDQMV…HYLDKHDPCR (73 aa)). 5 disordered regions span residues 281–459 (PGSF…SLAS), 473–574 (QLSE…RHTS), 697–743 (TTVR…KGKR), 758–781 (KLRPRIRPRRDHRPEKRPSRIPKP), and 801–860 (ATLG…ESWV). Polar residues predominate over residues 301–316 (GPSQPQPTMTISRSQS). Residues 347–364 (PPVRARTLREDPLPRSQE) are compositionally biased toward basic and acidic residues. 2 stretches are compositionally biased toward polar residues: residues 365–393 (KPTPSQRMSSPGPQFSSTCRGPDLQSTLS) and 473–485 (QLSEPMTVHSSSP). Residues 431-860 (QRLQIPEATS…PLSPEEESWV (430 aa)) are interaction with ADORA2A and GNAS. The segment covering 530–549 (NLDRSTHGHHSVEASGDHQT) has biased composition (basic and acidic residues). Over residues 724–733 (RSCSDPSSDK) the composition is skewed to polar residues. Basic residues predominate over residues 758–768 (KLRPRIRPRRD). Residues 828–840 (SNISLESSIQPAE) are compositionally biased toward polar residues.

The protein belongs to the GAS2 family. Interacts with ADORA2A (via its cytoplasmic C-terminal domain). Interacts with GNAS, GNAL, GNAQ, and GNA13. Interacts with MAPRE1. In terms of tissue distribution, expressed in tracheal epithelial cells (at protein level).

The protein resides in the cytoplasm. The protein localises to the cytoskeleton. Its subcellular location is the cell membrane. It localises to the stress fiber. It is found in the cilium basal body. Functionally, involved in the cross-linking of microtubules and microfilaments. Regulates microtubule dynamics and stability by interacting with microtubule plus-end tracking proteins, such as MAPRE1, to regulate microtubule growth along actin stress fibers. Enhances ADORA2-mediated adenylyl cyclase activation by acting as a scaffold to recruit trimeric G-protein complexes to ADORA2A. Regulates ciliary orientation and performance in cells located in the airway. In Mus musculus (Mouse), this protein is GAS2-like protein 2 (Gas2l2).